The following is a 539-amino-acid chain: Chaperonin GroEL (539 aa).

Residues 30 to 33 (TLGP), Lys-51, 87 to 91 (DGTTT), Gly-415, 479 to 481 (NAA), and Asp-495 contribute to the ATP site.

This sequence belongs to the chaperonin (HSP60) family. In terms of assembly, forms a cylinder of 14 subunits composed of two heptameric rings stacked back-to-back. Interacts with the co-chaperonin GroES.

The protein resides in the cytoplasm. It catalyses the reaction ATP + H2O + a folded polypeptide = ADP + phosphate + an unfolded polypeptide.. Its function is as follows. Together with its co-chaperonin GroES, plays an essential role in assisting protein folding. The GroEL-GroES system forms a nano-cage that allows encapsulation of the non-native substrate proteins and provides a physical environment optimized to promote and accelerate protein folding. The chain is Chaperonin GroEL from Enterobacter asburiae.